A 208-amino-acid polypeptide reads, in one-letter code: Protein-L-isoaspartate O-methyltransferase (208 aa).

Residue S59 is part of the active site.

The protein belongs to the methyltransferase superfamily. L-isoaspartyl/D-aspartyl protein methyltransferase family.

Its subcellular location is the cytoplasm. The enzyme catalyses [protein]-L-isoaspartate + S-adenosyl-L-methionine = [protein]-L-isoaspartate alpha-methyl ester + S-adenosyl-L-homocysteine. In terms of biological role, catalyzes the methyl esterification of L-isoaspartyl residues in peptides and proteins that result from spontaneous decomposition of normal L-aspartyl and L-asparaginyl residues. It plays a role in the repair and/or degradation of damaged proteins. This is Protein-L-isoaspartate O-methyltransferase from Cronobacter sakazakii (strain ATCC BAA-894) (Enterobacter sakazakii).